Reading from the N-terminus, the 302-residue chain is MNETQLTHLQQLEAESIYILREVVAEFENPVMLYSIGKDSSVMLHLARKAFYPAKLPFPLLHVDTGWKFREMYEFRDKTAKEYGFDLKVYRNPQGAQLGINPFIHGSAKHTDIMKTEGLKQALDKYGFDAAFGGARRDEEKSRAKERIYSFRDRSHRWDPKNQRPELWQNYNGQINKGESIRVFPLSNWTELDIWQYIYLENIDIVPLYFAKHRPVIERDGTLIMVDDDRIDLKAGEVITQQKVRFRTLGCWPLTGAIPSQADTLPAIIEEMLISTSSERQGRLIDSDQSASMELKKRQGYF.

The protein belongs to the PAPS reductase family. CysD subfamily. As to quaternary structure, heterodimer composed of CysD, the smaller subunit, and CysN.

It carries out the reaction sulfate + ATP + H(+) = adenosine 5'-phosphosulfate + diphosphate. The protein operates within sulfur metabolism; hydrogen sulfide biosynthesis; sulfite from sulfate: step 1/3. Its function is as follows. With CysN forms the ATP sulfurylase (ATPS) that catalyzes the adenylation of sulfate producing adenosine 5'-phosphosulfate (APS) and diphosphate, the first enzymatic step in sulfur assimilation pathway. APS synthesis involves the formation of a high-energy phosphoric-sulfuric acid anhydride bond driven by GTP hydrolysis by CysN coupled to ATP hydrolysis by CysD. The polypeptide is Sulfate adenylyltransferase subunit 2 (Proteus mirabilis (strain HI4320)).